We begin with the raw amino-acid sequence, 119 residues long: Large ribosomal subunit protein bL20c (119 aa).

This sequence belongs to the bacterial ribosomal protein bL20 family.

It localises to the plastid. Its subcellular location is the chloroplast. Functionally, binds directly to 23S ribosomal RNA and is necessary for the in vitro assembly process of the 50S ribosomal subunit. It is not involved in the protein synthesizing functions of that subunit. This is Large ribosomal subunit protein bL20c from Brachypodium distachyon (Purple false brome).